We begin with the raw amino-acid sequence, 134 residues long: Terepressin/terephysin (134 aa).

Residues 1–33 (MKCSVLQMSRLSWTACVLLLPLLLLTLQGGVQG) form the signal peptide. Cysteine 34 and cysteine 39 are joined by a disulfide. Positions 44–50 (KRAVDSV) are excised as a propeptide. 7 disulfides stabilise this stretch: cysteine 56-cysteine 100, cysteine 59-cysteine 73, cysteine 67-cysteine 90, cysteine 74-cysteine 80, cysteine 107-cysteine 121, cysteine 115-cysteine 133, and cysteine 122-cysteine 127.

Belongs to the vasopressin/oxytocin family. Contains 7 disulfide bonds. Expressed by the venom duct.

It is found in the secreted. The chain is Terepressin/terephysin from Terebra anilis (Auger snail).